The chain runs to 798 residues: Phenylalanine--tRNA ligase beta subunit (798 aa).

Residues 39–148 (NPIFDGFLVG…EDIPIGKKIN (110 aa)) form the tRNA-binding domain. One can recognise a B5 domain in the interval 402–477 (SCSNKIKLYH…RIYNYNNIPL (76 aa)). Residues Asp-455, Asp-461, and Asp-465 each contribute to the Mg(2+) site. The 94-residue stretch at 704 to 797 (SKYPTSRRDI…LKKKFQVVLR (94 aa)) folds into the FDX-ACB domain.

Belongs to the phenylalanyl-tRNA synthetase beta subunit family. Type 1 subfamily. As to quaternary structure, tetramer of two alpha and two beta subunits. It depends on Mg(2+) as a cofactor.

Its subcellular location is the cytoplasm. It catalyses the reaction tRNA(Phe) + L-phenylalanine + ATP = L-phenylalanyl-tRNA(Phe) + AMP + diphosphate + H(+). The polypeptide is Phenylalanine--tRNA ligase beta subunit (pheT) (Buchnera aphidicola subsp. Schizaphis graminum (strain Sg)).